The chain runs to 130 residues: Protein PELPK2 (130 aa).

The N-terminal stretch at 1 to 32 (MTLKKSFSASLLSPFLIICLIALLSVPVSVGA) is a signal peptide. Repeat copies occupy residues 47–51 (PELPK), 52–56 (PEMPK), 58–62 (PEFPK), 63–67 (LELPK), 69–73 (PEIPK), 74–78 (PEMPK), 80–84 (PEIQK), 91–95 (PELPK), 97–101 (PEFPK), 102–106 (FDFPK), 108–112 (PELPK), 113–117 (PEETK), and 121–125 (FTMPK). Residues 47–125 (PELPKPEMPK…TKVPAFTMPK (79 aa)) are 13 X 5 AA tandem repeat of P-[DEGQ]-[AEFLIV]-[QPT]-K. The span at 71–84 (IPKPEMPKLPEIQK) shows a compositional bias: basic and acidic residues. Residues 71 to 130 (IPKPEMPKLPEIQKPELPTFPELPKMPEFPKFDFPKLPELPKPEETKVPAFTMPKFPGSP) form a disordered region. The span at 98 to 117 (EFPKFDFPKLPELPKPEETK) shows a compositional bias: basic and acidic residues.

The protein localises to the secreted. It localises to the cell wall. The chain is Protein PELPK2 from Arabidopsis thaliana (Mouse-ear cress).